Reading from the N-terminus, the 299-residue chain is MDLVLSAADYYFFTPYVYPATWPEDNIIRQTISLLIVTNLGAYILYFFCATLSYYFVYDHSLMKHPQFLKNQVSREIVFTVKSLPWISIPTVSLFLLELRGYSKLYDDIGDFPNGWIHLMVSVVSFLFFTDMLIYWIHRGLHHRLVYKRIHKPHHIWKIPTPFASHAFHPVDGFLQSLPYHIYPFVFPLHKVVYLGLYVLVNVWTISIHDGDFRVPQILRPFINGSAHHTDHHMFFDYNYGQYFTLWDRIGGSFKHPSSFEGKGPHSYVKNMTEKESNSFAENGCKGKKVGNGEFTKNK.

Helical transmembrane passes span 32 to 52 (ISLL…CATL), 79 to 99 (FTVK…LLEL), and 117 to 137 (IHLM…IYWI). Positions 124–252 (VSFLFFTDML…YFTLWDRIGG (129 aa)) constitute a Fatty acid hydroxylase domain. The Histidine box-1 signature appears at 138 to 143 (HRGLHH). Residues 151–155 (HKPHH) carry the Histidine box-2 motif. Residues 186-206 (VFPLHKVVYLGLYVLVNVWTI) traverse the membrane as a helical segment. The Histidine box-3 signature appears at 228 to 233 (HHTDHH). Phosphoserine is present on S253. The segment at 280 to 299 (FAENGCKGKKVGNGEFTKNK) is disordered.

This sequence belongs to the sterol desaturase family. The cofactor is Fe cation.

The protein localises to the endoplasmic reticulum membrane. The enzyme catalyses a Delta(7)-sterol + 2 Fe(II)-[cytochrome b5] + O2 + 2 H(+) = a Delta(5),Delta(7)-sterol + 2 Fe(III)-[cytochrome b5] + 2 H2O. It catalyses the reaction lathosterol + 2 Fe(II)-[cytochrome b5] + O2 + 2 H(+) = 7-dehydrocholesterol + 2 Fe(III)-[cytochrome b5] + 2 H2O. It carries out the reaction 5alpha-cholesta-7,24-dien-3beta-ol + 2 Fe(II)-[cytochrome b5] + O2 + 2 H(+) = 7-dehydrodesmosterol + 2 Fe(III)-[cytochrome b5] + 2 H2O. Its pathway is steroid biosynthesis; cholesterol biosynthesis. Its function is as follows. Catalyzes the penultimate step of the biosynthesis of cholesterol, the dehydrogenation of lathosterol into 7-dehydrocholesterol (7-DHC). Cholesterol is the major sterol component in mammalian membranes and a precursor for bile acid and steroid hormone synthesis. In addition to its essential role in cholesterol biosynthesis, it also indirectly regulates ferroptosis through the production of 7-DHC. By diverting the spread of damage caused by peroxyl radicals from the phospholipid components to its sterol nucleus, 7-DHC prevents this form of cell death. This is Lathosterol oxidase from Mus musculus (Mouse).